The sequence spans 264 residues: Zearalenone hydrolase (264 aa).

Positions 27 to 207 constitute an AB hydrolase-1 domain; sequence VLVPDGLGEC…KDLEALRGKP (181 aa). G32, S102, and S103 together coordinate zearalenone. S102 is a catalytic residue. E126 is a catalytic residue. Zearalenone contacts are provided by W183, Y187, S220, and H242. The active site involves H242.

This sequence belongs to the AB hydrolase superfamily. Hydrolase RutD family. In terms of assembly, homodimer.

The catalysed reaction is zearalenone + H2O = hydrolyzed zearalenone + H(+). Lactonohydrolase that specifically hydrolyzes and deactivates the mycotoxin zearalenone (ZEN) and its zearalenol (ZOL) derivatives. ZHD101 prefers ZEN to ZOL as its substrate, but ZOL, especially the alpha-form, shows higher estrogenic toxicity than ZEN. This chain is Zearalenone hydrolase, found in Bionectria ochroleuca (Gliocladium roseum).